Consider the following 315-residue polypeptide: Cobalamin biosynthesis protein CobD (315 aa).

7 helical membrane passes run 1–21 (MLDIIIAVIIDWIIGDPYWFP), 50–70 (VFGGFIVIIVSSISFLIPFII), 79–99 (VIYHVINIFFLWTVLAAKSLH), 151–171 (DGIIAPLLFAMLGGAPLAMMY), 209–229 (VTGIIMCLVSPIIGGNIFYSI), 250–270 (AAAAASGIMLGGTNIYFGEVV), and 291–311 (IILMYSSEILFIIIYVIIICF).

Belongs to the CobD/CbiB family.

It localises to the cell membrane. The protein operates within cofactor biosynthesis; adenosylcobalamin biosynthesis. Its function is as follows. Converts cobyric acid to cobinamide by the addition of aminopropanol on the F carboxylic group. This Clostridium acetobutylicum (strain ATCC 824 / DSM 792 / JCM 1419 / IAM 19013 / LMG 5710 / NBRC 13948 / NRRL B-527 / VKM B-1787 / 2291 / W) protein is Cobalamin biosynthesis protein CobD.